Here is a 172-residue protein sequence, read N- to C-terminus: Folate transporter FolT (172 aa).

The next 5 membrane-spanning stretches (helical) occupy residues valine 6–isoleucine 26, phenylalanine 35–valine 55, alanine 71–phenylalanine 91, valine 101–leucine 121, and valine 131–isoleucine 151.

In terms of assembly, forms a stable energy-coupling factor (ECF) transporter complex composed of a membrane-embedded substrate-binding protein (S component), two ATP-binding proteins (A components) and a transmembrane protein (T component).

It is found in the cell membrane. Folate-binding protein that interacts with the energy-coupling factor (ECF) ABC-transporter complex. Unlike classic ABC transporters this ECF transporter provides the energy necessary to transport a number of different substrates. The substrates themselves are bound by transmembrane, not extracytoplasmic soluble proteins. In Clostridium novyi (strain NT), this protein is Folate transporter FolT (folT).